Reading from the N-terminus, the 533-residue chain is T-complex protein 1 subunit delta (533 aa).

Over residues 1–15 (MAQSQVGKGSPSNAT) the composition is skewed to polar residues. The disordered stretch occupies residues 1 to 25 (MAQSQVGKGSPSNATFRDKEKPQEV). Basic and acidic residues predominate over residues 16–25 (FRDKEKPQEV).

This sequence belongs to the TCP-1 chaperonin family. In terms of assembly, heterooligomeric complex of about 850 to 900 kDa that forms two stacked rings, 12 to 16 nm in diameter.

Its subcellular location is the cytoplasm. Molecular chaperone; assists the folding of proteins upon ATP hydrolysis. Known to play a role, in vitro, in the folding of actin and tubulin. This Debaryomyces hansenii (strain ATCC 36239 / CBS 767 / BCRC 21394 / JCM 1990 / NBRC 0083 / IGC 2968) (Yeast) protein is T-complex protein 1 subunit delta (CCT4).